The primary structure comprises 164 residues: 6,7-dimethyl-8-ribityllumazine synthase (164 aa).

5-amino-6-(D-ribitylamino)uracil-binding positions include Phe-22, 56–58 (AWE), and 80–82 (AVI). (2S)-2-hydroxy-3-oxobutyl phosphate is bound at residue 85 to 86 (DT). Residue His-88 is the Proton donor of the active site. A 5-amino-6-(D-ribitylamino)uracil-binding site is contributed by Leu-113. Arg-127 serves as a coordination point for (2S)-2-hydroxy-3-oxobutyl phosphate.

Belongs to the DMRL synthase family.

It carries out the reaction (2S)-2-hydroxy-3-oxobutyl phosphate + 5-amino-6-(D-ribitylamino)uracil = 6,7-dimethyl-8-(1-D-ribityl)lumazine + phosphate + 2 H2O + H(+). Its pathway is cofactor biosynthesis; riboflavin biosynthesis; riboflavin from 2-hydroxy-3-oxobutyl phosphate and 5-amino-6-(D-ribitylamino)uracil: step 1/2. Its function is as follows. Catalyzes the formation of 6,7-dimethyl-8-ribityllumazine by condensation of 5-amino-6-(D-ribitylamino)uracil with 3,4-dihydroxy-2-butanone 4-phosphate. This is the penultimate step in the biosynthesis of riboflavin. The sequence is that of 6,7-dimethyl-8-ribityllumazine synthase from Gemmatimonas aurantiaca (strain DSM 14586 / JCM 11422 / NBRC 100505 / T-27).